Reading from the N-terminus, the 316-residue chain is Large ribosomal subunit protein uL10 (316 aa).

Residues 282–316 form a disordered region; it reads ASAAKADEPKKEEAKKVEEEEEEEEDGFMGFGMFD. A compositionally biased stretch (basic and acidic residues) spans 286–299; it reads KADEPKKEEAKKVE.

It belongs to the universal ribosomal protein uL10 family. In terms of assembly, P0 forms a pentameric complex by interaction with dimers of P1 and P2. Post-translationally, phosphorylated.

Its function is as follows. Ribosomal protein P0 is the functional equivalent of E.coli protein L10. This chain is Large ribosomal subunit protein uL10 (RPLP0), found in Plasmodium falciparum (isolate 7G8).